A 152-amino-acid chain; its full sequence is Transcriptional regulator MraZ (152 aa).

SpoVT-AbrB domains lie at 5 to 52 (ASAI…PLKE) and 81 to 124 (ATEC…SDAE).

It belongs to the MraZ family. Forms oligomers.

It is found in the cytoplasm. The protein resides in the nucleoid. This chain is Transcriptional regulator MraZ, found in Pasteurella multocida (strain Pm70).